Here is a 661-residue protein sequence, read N- to C-terminus: MGFKLQMSWMPSLLSQKRRNGPPLGLRNLGNTCYLNSVLQCLTFTPPLANFCLTHKHSSHCDTYVDGERKRDCPFCIVEKRIARSLSVDLTTDAPNKISSCLKIFAEHFKLGRQEDAHEFLRYVIDACHNTSLRLKKLRYNGNEPFNGNSVVKEIFGGALQSQVKCLSCGAESNKADEIMDISLEILQSSSVKESLQKFFQSEILDGNNKYRCESCEKLVTARKQMSILQAPNILVIQLKRFGGIFGGKIDKAISFGEILVLSNFMSKASKDPQPEYKLFGIIVHSGFSPESGHYYAYVKDSLGRWYCCNDSFVSLSTLQEVLSEKAYILFFSRSNQRPASAKTLVTSNGTTSHEVNGCETSNPQKFIGPLNGFNMKPQAEQSFQKGNLASSKPHKFIRPKPRAEQAPLEDNLLSSKVEKAPLRPHAKVSISVNLGAKRVSPVNGRLSFHQDENIAPKANKENSVSVLPTKVNSGTERKFGTENGGNGVKENGSAPGSSNHKVALHPHERSNGSSNGGDHHKDNLHPCGSNGSQNGTAHPETERNGVSTTQSKGLCSSTKEDPCILLRKDESSRNELEAIKESLKKDALSHLRSCGWYDKVLISMHAKKRLRTEQSGGEDGSDLKRRLIEDVKSSLKSQIPEELKADLVNRIWEISKKKYS.

Positions 24–335 (LGLRNLGNTC…KAYILFFSRS (312 aa)) constitute a USP domain. Cys33 serves as the catalytic Nucleophile. The active-site Proton acceptor is the His294. 2 disordered regions span residues 387–406 (GNLASSKPHKFIRPKPRAEQ) and 449–558 (FHQD…LCSS). Residues 449-461 (FHQDENIAPKANK) show a composition bias toward basic and acidic residues. Composition is skewed to polar residues over residues 462-475 (ENSVSVLPTKVNSG) and 545-558 (NGVSTTQSKGLCSS).

Belongs to the peptidase C19 family.

It catalyses the reaction Thiol-dependent hydrolysis of ester, thioester, amide, peptide and isopeptide bonds formed by the C-terminal Gly of ubiquitin (a 76-residue protein attached to proteins as an intracellular targeting signal).. Recognizes and hydrolyzes the peptide bond at the C-terminal Gly of ubiquitin. Involved in the processing of poly-ubiquitin precursors as well as that of ubiquitinated proteins. This Arabidopsis thaliana (Mouse-ear cress) protein is Ubiquitin carboxyl-terminal hydrolase 25 (UBP25).